The primary structure comprises 94 residues: Large ribosomal subunit protein bL25 (94 aa).

Belongs to the bacterial ribosomal protein bL25 family. As to quaternary structure, part of the 50S ribosomal subunit; part of the 5S rRNA/L5/L18/L25 subcomplex. Contacts the 5S rRNA. Binds to the 5S rRNA independently of L5 and L18.

Functionally, this is one of the proteins that binds to the 5S RNA in the ribosome where it forms part of the central protuberance. In Photorhabdus laumondii subsp. laumondii (strain DSM 15139 / CIP 105565 / TT01) (Photorhabdus luminescens subsp. laumondii), this protein is Large ribosomal subunit protein bL25.